A 303-amino-acid chain; its full sequence is Bifunctional protein FolD 2 (303 aa).

NADP(+) is bound by residues 169-171, S194, and I235; that span reads GRS.

The protein belongs to the tetrahydrofolate dehydrogenase/cyclohydrolase family. Homodimer.

The enzyme catalyses (6R)-5,10-methylene-5,6,7,8-tetrahydrofolate + NADP(+) = (6R)-5,10-methenyltetrahydrofolate + NADPH. It carries out the reaction (6R)-5,10-methenyltetrahydrofolate + H2O = (6R)-10-formyltetrahydrofolate + H(+). The protein operates within one-carbon metabolism; tetrahydrofolate interconversion. Functionally, catalyzes the oxidation of 5,10-methylenetetrahydrofolate to 5,10-methenyltetrahydrofolate and then the hydrolysis of 5,10-methenyltetrahydrofolate to 10-formyltetrahydrofolate. The polypeptide is Bifunctional protein FolD 2 (Pseudomonas putida (strain GB-1)).